The sequence spans 85 residues: Arminin 6494 (85 aa).

The N-terminal stretch at 1–18 (MKTVFAILFLAFIALTYA) is a signal peptide. Positions 19 to 57 (RSYEDVKEEIKNEVEKEILEDLEEESDELNDKRKEINDA) are excised as a propeptide. Alanine amide is present on Ala82.

This sequence belongs to the arminin family. In terms of tissue distribution, expressed in entodermal epithelium along the body column.

It localises to the secreted. Its subcellular location is the target cell membrane. Functionally, antimicrobial peptide with a broad-spectrum antimicrobial activity. Keeps its antibacterial activity under a wide range of salt concentrations that mimic physiological conditions of human blood, which is surprising, since Hydra is an obligate freshwater animal with nearly no salt tolerance. Does not affect red blood cells. In Hydra vulgaris (Hydra), this protein is Arminin 6494.